The primary structure comprises 556 residues: Oxygen-dependent choline dehydrogenase (556 aa).

6–35 (DYIIIGAGSAGNVLAARLTEDPGVTVLLLE) is a binding site for FAD. The active-site Proton acceptor is the His-475.

The protein belongs to the GMC oxidoreductase family. Requires FAD as cofactor.

The catalysed reaction is choline + A = betaine aldehyde + AH2. The enzyme catalyses betaine aldehyde + NAD(+) + H2O = glycine betaine + NADH + 2 H(+). It participates in amine and polyamine biosynthesis; betaine biosynthesis via choline pathway; betaine aldehyde from choline (cytochrome c reductase route): step 1/1. Functionally, involved in the biosynthesis of the osmoprotectant glycine betaine. Catalyzes the oxidation of choline to betaine aldehyde and betaine aldehyde to glycine betaine at the same rate. This chain is Oxygen-dependent choline dehydrogenase, found in Xanthomonas axonopodis pv. citri (strain 306).